We begin with the raw amino-acid sequence, 84 residues long: uncharacterized protein (84 aa).

Residues Ala-7–Leu-23 traverse the membrane as a helical segment.

It is found in the membrane. This is an uncharacterized protein from Haemophilus influenzae (strain ATCC 51907 / DSM 11121 / KW20 / Rd).